Here is a 64-residue protein sequence, read N- to C-terminus: Large ribosomal subunit protein bL35 (64 aa).

Over residues 1–28 (MSKAKTHSGAAKRFKKTASGYKHKHAFK) the composition is skewed to basic residues. Positions 1-51 (MSKAKTHSGAAKRFKKTASGYKHKHAFKSHILTKMTTKRKRQLRGTSLLNA) are disordered.

Belongs to the bacterial ribosomal protein bL35 family.

The polypeptide is Large ribosomal subunit protein bL35 (Saccharophagus degradans (strain 2-40 / ATCC 43961 / DSM 17024)).